The primary structure comprises 436 residues: ATP-dependent protease ATPase subunit HslU (436 aa).

ATP is bound by residues I19, 61–66 (GVGKTE), D249, E314, and R386.

It belongs to the ClpX chaperone family. HslU subfamily. As to quaternary structure, a double ring-shaped homohexamer of HslV is capped on each side by a ring-shaped HslU homohexamer. The assembly of the HslU/HslV complex is dependent on binding of ATP.

The protein localises to the cytoplasm. Functionally, ATPase subunit of a proteasome-like degradation complex; this subunit has chaperone activity. The binding of ATP and its subsequent hydrolysis by HslU are essential for unfolding of protein substrates subsequently hydrolyzed by HslV. HslU recognizes the N-terminal part of its protein substrates and unfolds these before they are guided to HslV for hydrolysis. In Bartonella bacilliformis (strain ATCC 35685 / KC583 / Herrer 020/F12,63), this protein is ATP-dependent protease ATPase subunit HslU.